We begin with the raw amino-acid sequence, 314 residues long: Nodulation protein D 2 (314 aa).

The 58-residue stretch at 6 to 63 (LDLNLLVVLDALMTERNLTAAARSINLSQPAMSAAVARLRTNFRDDLFAMAGREFIPT) folds into the HTH lysR-type domain. Residues 23 to 42 (LTAAARSINLSQPAMSAAVA) constitute a DNA-binding region (H-T-H motif).

The protein belongs to the LysR transcriptional regulatory family.

Its function is as follows. NodD regulates the expression of the nodABCFE genes which encode other nodulation proteins. NodD is also a negative regulator of its own expression. Binds flavonoids as inducers. The sequence is that of Nodulation protein D 2 (nodD2) from Rhizobium tropici.